A 245-amino-acid polypeptide reads, in one-letter code: Uridylate kinase (245 aa).

16–19 (KLSG) contributes to the ATP binding site. Gly58 contributes to the UMP binding site. Gly59 and Arg63 together coordinate ATP. UMP is bound by residues Asp78 and 139-146 (TGNPFFTT). 3 residues coordinate ATP: Thr166, Tyr172, and Asp175.

This sequence belongs to the UMP kinase family. In terms of assembly, homohexamer.

The protein localises to the cytoplasm. The catalysed reaction is UMP + ATP = UDP + ADP. The protein operates within pyrimidine metabolism; CTP biosynthesis via de novo pathway; UDP from UMP (UMPK route): step 1/1. Its activity is regulated as follows. Inhibited by UTP. In terms of biological role, catalyzes the reversible phosphorylation of UMP to UDP. The chain is Uridylate kinase from Idiomarina loihiensis (strain ATCC BAA-735 / DSM 15497 / L2-TR).